The chain runs to 527 residues: Fusicoccadiene C-8 hydroxylase (527 aa).

A helical transmembrane segment spans residues 15–35; it reads GKPLLLFLILITLTYSLGIVF. A glycan (N-linked (GlcNAc...) asparagine) is linked at N125. Heme is bound at residue C465. N496 carries an N-linked (GlcNAc...) asparagine glycan.

Belongs to the cytochrome P450 family. Heme is required as a cofactor.

It is found in the membrane. Its pathway is mycotoxin biosynthesis. In terms of biological role, cytochrome P450 monooxygenase; part of the gene cluster that mediates the biosynthesis of the diterpene glucoside brassicicene C. In the first step of the brassicicene C biosynthesis, the bifunctional diterpene synthase bsc8 that possesses both prenyl transferase and terpene cyclase activity, converts isopentenyl diphosphate and dimethylallyl diphosphate into geranylgeranyl diphosphate (GGDP) that is further converted into fusicocca-2,10(14)-diene, the first precursor for brassicicene C. Fusicocca-2,10(14)-diene is then substrate of cytochrome P450 monooxygenase bsc1 for hydroxylation at the C-8 position. Oxidation at C-16 position to aldehyde is then catalyzed by the cytochrome P450 monooyxygenase bsc7, yielding fusicocca-2,10(14)-diene-8-beta,16-diol. Follows the isomerization of the double bond and reduction of aldehyde to alcohol catalyzed by the short-chain dehydrogenase/reductase bsc3 to yield the diol compound fusicocca-1,10(14)-diene-8 beta,16-diol. The next step is the oxidation at the C-3 position of fusicocca-2,10(14)-diene-8-beta,16-diol catalyzed by the alpha-ketoglutarate dependent dioxygenase bsc9, to produce a triol compound. Methylation of the hydroxy group at position 16 is performed by the methyltransferase bsc6. 16-O-methylation is followed by oxidation at the C-13 position to ketone and an alkyl shift of the methyl group leads to brassicicene C. Although the probable acetyltransferase bsc4 is included in the gene cluster, no acetylation reactions are necessary for brassicicene C biosynthesis. However, the fact that brassicicene E, which is a structurally related compound having an acetoxy group at position 12, was previously isolated from another strain of A.brassicicola suggests that the ATCC 96836 strain might also produce a small amount of brassicicene E. This chain is Fusicoccadiene C-8 hydroxylase, found in Alternaria brassicicola (Dark leaf spot agent).